A 422-amino-acid chain; its full sequence is Synaptotagmin-1 (422 aa).

The Vesicular portion of the chain corresponds to 1 to 57 (MVSESHHEALAAPPVTTVATVLPSNATEPASPGEGKEDAFSKLKEKFMNELHKIPLP). The N-linked (GlcNAc...) asparagine glycan is linked to Asn25. A helical transmembrane segment spans residues 58–80 (PWALIAIAIVAVLLVLTCCFCIC). 5 S-palmitoyl cysteine lipidation sites follow: Cys75, Cys76, Cys78, Cys80, and Cys83. Residues 81-422 (KKCLFKKKNK…EVDAMLAVKK (342 aa)) are Cytoplasmic-facing. Residues 113–142 (TMKDQALKDDDAETGLTDGEEKEEPKEEEK) are disordered. Positions 122–134 (DDAETGLTDGEEK) are enriched in acidic residues. Residue Thr129 is modified to Phosphothreonine. The interval 136–382 (EPKEEEKLGK…AIGKVFVGYN (247 aa)) is phospholipid binding. In terms of domain architecture, C2 1 spans 142 to 261 (KLGKLQYSLD…DFGHVTEEWR (120 aa)). Positions 172, 173, and 179 each coordinate Ca(2+). Tyr230 is subject to Phosphotyrosine. 6 residues coordinate Ca(2+): Asp231, Phe232, Asp233, Ser236, Lys237, and Asp239. A Phosphoserine modification is found at Ser265. The 134-residue stretch at 273-406 (KLGDICFSLR…NPRRPIAQWH (134 aa)) folds into the C2 2 domain. Ca(2+) contacts are provided by Asp304 and Asp310. Residues Ser343 and Ser345 each carry the phosphoserine modification. Ca(2+) contacts are provided by Asp364, Asp366, and Asp372.

This sequence belongs to the synaptotagmin family. In terms of assembly, homotetramer. Heterodimer; heterodimerizes with SYT2 in presence of calcium. Interacts with SCAMP5. Interacts with STON2. Forms a complex with SV2B, syntaxin 1 and SNAP25. Interacts with SV2A, SV2B and SV2C. Interacts with RIMS1. Interacts with PRRT2. Interacts with DNAJC5 in a phosphorylation-dependent manner. Interacts (via N-terminus) with RAB3A. Interacts with SYT12. Interacts with calmodulin. Interacts with DNM1 (via C-terminal proline-rich domain (PRD)); this interaction facilitates vesicle fission during clathrin-mediated endocytosis (CME). Ca(2+) is required as a cofactor. Glycosylated. As to expression, expressed in melanocytes.

The protein localises to the cytoplasmic vesicle. The protein resides in the secretory vesicle membrane. Its subcellular location is the secretory vesicle. It localises to the synaptic vesicle membrane. It is found in the chromaffin granule membrane. The protein localises to the cytoplasm. Its function is as follows. Calcium sensor that participates in triggering neurotransmitter release at the synapse. May have a regulatory role in the membrane interactions during trafficking of synaptic vesicles at the active zone of the synapse. It binds acidic phospholipids with a specificity that requires the presence of both an acidic head group and a diacyl backbone. A Ca(2+)-dependent interaction between synaptotagmin and putative receptors for activated protein kinase C has also been reported. It can bind to at least three additional proteins in a Ca(2+)-independent manner; these are neurexins, syntaxin and AP2. Plays a role in dendrite formation by melanocytes. The polypeptide is Synaptotagmin-1 (Homo sapiens (Human)).